A 134-amino-acid polypeptide reads, in one-letter code: MILACDVGLKRIGIAALLNGVVLPLEAILRHNRNQASRDLSDLLREKNIQVLVVGKPNESYADTNVRIEHFIKLVDFTGEIVFINEDNSSIEAYDNLEHLGRKNKRLATKDGRLDSLSACRILERYCQQVLKNH.

The protein belongs to the YqgF nuclease family.

It localises to the cytoplasm. Could be a nuclease involved in processing of the 5'-end of pre-16S rRNA. This is Putative pre-16S rRNA nuclease from Helicobacter pylori (strain P12).